The primary structure comprises 697 residues: Elongation factor G (697 aa).

The tr-type G domain occupies A10–L285. Residues A19–T26, D83–H87, and N137–D140 contribute to the GTP site.

Belongs to the TRAFAC class translation factor GTPase superfamily. Classic translation factor GTPase family. EF-G/EF-2 subfamily.

It is found in the cytoplasm. In terms of biological role, catalyzes the GTP-dependent ribosomal translocation step during translation elongation. During this step, the ribosome changes from the pre-translocational (PRE) to the post-translocational (POST) state as the newly formed A-site-bound peptidyl-tRNA and P-site-bound deacylated tRNA move to the P and E sites, respectively. Catalyzes the coordinated movement of the two tRNA molecules, the mRNA and conformational changes in the ribosome. In Lactobacillus helveticus (strain DPC 4571), this protein is Elongation factor G.